The chain runs to 555 residues: Formate--tetrahydrofolate ligase (555 aa).

64–71 (TKAGIGKT) contacts ATP.

Belongs to the formate--tetrahydrofolate ligase family.

It carries out the reaction (6S)-5,6,7,8-tetrahydrofolate + formate + ATP = (6R)-10-formyltetrahydrofolate + ADP + phosphate. Its pathway is one-carbon metabolism; tetrahydrofolate interconversion. The polypeptide is Formate--tetrahydrofolate ligase (Parabacteroides distasonis (strain ATCC 8503 / DSM 20701 / CIP 104284 / JCM 5825 / NCTC 11152)).